The primary structure comprises 465 residues: 3-isopropylmalate dehydratase large subunit (465 aa).

[4Fe-4S] cluster contacts are provided by C347, C407, and C410. The segment at 416–443 (DTLRPGERSASTSNRNFEGRQGPGGRTH) is disordered.

The protein belongs to the aconitase/IPM isomerase family. LeuC type 1 subfamily. Heterodimer of LeuC and LeuD. The cofactor is [4Fe-4S] cluster.

The catalysed reaction is (2R,3S)-3-isopropylmalate = (2S)-2-isopropylmalate. Its pathway is amino-acid biosynthesis; L-leucine biosynthesis; L-leucine from 3-methyl-2-oxobutanoate: step 2/4. In terms of biological role, catalyzes the isomerization between 2-isopropylmalate and 3-isopropylmalate, via the formation of 2-isopropylmaleate. The protein is 3-isopropylmalate dehydratase large subunit of Frankia casuarinae (strain DSM 45818 / CECT 9043 / HFP020203 / CcI3).